The sequence spans 163 residues: Phosphopantetheine adenylyltransferase (163 aa).

Threonine 10 lines the substrate pocket. ATP is bound by residues 10-11 (TF) and histidine 18. 3 residues coordinate substrate: lysine 42, leucine 74, and arginine 88. ATP contacts are provided by residues 89 to 91 (GLR), glutamate 99, and 124 to 130 (NSFISST).

This sequence belongs to the bacterial CoaD family. In terms of assembly, homohexamer. It depends on Mg(2+) as a cofactor.

Its subcellular location is the cytoplasm. The catalysed reaction is (R)-4'-phosphopantetheine + ATP + H(+) = 3'-dephospho-CoA + diphosphate. It functions in the pathway cofactor biosynthesis; coenzyme A biosynthesis; CoA from (R)-pantothenate: step 4/5. In terms of biological role, reversibly transfers an adenylyl group from ATP to 4'-phosphopantetheine, yielding dephospho-CoA (dPCoA) and pyrophosphate. This is Phosphopantetheine adenylyltransferase from Shewanella baltica (strain OS155 / ATCC BAA-1091).